A 319-amino-acid chain; its full sequence is Ornithine carbamoyltransferase (319 aa).

Residues 57–60 (STRT), Gln-84, Arg-108, and 135–138 (HPCQ) each bind carbamoyl phosphate. Residues Asn-166, Asp-230, and 234–235 (SM) contribute to the L-ornithine site. Residues 270–271 (CL) and Arg-298 each bind carbamoyl phosphate.

This sequence belongs to the aspartate/ornithine carbamoyltransferase superfamily. OTCase family.

It localises to the cytoplasm. It catalyses the reaction carbamoyl phosphate + L-ornithine = L-citrulline + phosphate + H(+). It participates in amino-acid biosynthesis; L-arginine biosynthesis; L-arginine from L-ornithine and carbamoyl phosphate: step 1/3. In terms of biological role, reversibly catalyzes the transfer of the carbamoyl group from carbamoyl phosphate (CP) to the N(epsilon) atom of ornithine (ORN) to produce L-citrulline. This Bacillus subtilis (strain 168) protein is Ornithine carbamoyltransferase (argF).